We begin with the raw amino-acid sequence, 378 residues long: 1-acyl-sn-glycerol-3-phosphate acyltransferase delta (378 aa).

A helical transmembrane segment spans residues 11 to 31; that stretch reads FLCHLVFCYVFIASGLIINTI. The HXXXXD motif motif lies at 96-101; it reads HKFEID. 3 helical membrane-spanning segments follow: residues 125–145, 307–327, and 338–358; these read ELAY…VFCS, TLVN…QFLV, and LASF…MIGV.

This sequence belongs to the 1-acyl-sn-glycerol-3-phosphate acyltransferase family.

The protein localises to the endoplasmic reticulum membrane. It carries out the reaction a 1-acyl-sn-glycero-3-phosphate + an acyl-CoA = a 1,2-diacyl-sn-glycero-3-phosphate + CoA. It catalyses the reaction (4Z,7Z,10Z,13Z,16Z,19Z)-docosahexaenoyl-CoA + 1-hexadecanoyl-sn-glycero-3-phosphate = 1-hexadecanoyl-2-(4Z,7Z,10Z,13Z,16Z,19Z-docosahexaenoyl)-sn-glycero-3-phosphate + CoA. The catalysed reaction is 1-octadecanoyl-sn-glycero-3-phosphate + (9Z,12Z)-octadecadienoyl-CoA = 1-octadecanoyl-2-(9Z,12Z-octadecadienoyl)-sn-glycero-3-phosphate + CoA. The enzyme catalyses 1-octadecanoyl-sn-glycero-3-phosphate + (4Z,7Z,10Z,13Z,16Z,19Z)-docosahexaenoyl-CoA = 1-octadecanoyl-2-(4Z,7Z,10Z,13Z,16Z,19Z-docosahexaenoyl)-sn-glycero-3-phosphate + CoA. It carries out the reaction (4Z,7Z,10Z,13Z,16Z,19Z)-docosahexaenoyl-CoA + 1-(9Z-octadecenoyl)-sn-glycero-3-phosphate = 1-(9Z-octadecenoyl)-2-(4Z,7Z,10Z,13Z,16Z,19Z-docosahexaenoyl)-sn-glycero-3-phosphate + CoA. It functions in the pathway phospholipid metabolism; CDP-diacylglycerol biosynthesis; CDP-diacylglycerol from sn-glycerol 3-phosphate: step 2/3. Converts 1-acyl-sn-glycerol-3-phosphate (lysophosphatidic acid or LPA) into 1,2-diacyl-sn-glycerol-3-phosphate (phosphatidic acid or PA) by incorporating an acyl moiety at the sn-2 position of the glycerol backbone. Exhibits high acyl-CoA specificity for polyunsaturated fatty acyl-CoA, especially docosahexaenoyl-CoA (22:6-CoA, DHA-CoA). The chain is 1-acyl-sn-glycerol-3-phosphate acyltransferase delta (AGPAT4) from Pongo abelii (Sumatran orangutan).